Reading from the N-terminus, the 1307-residue chain is Light-sensor Protein kinase (1307 aa).

The GAF domain maps to 215-394 (DIELLCDTIV…VFGMQLNLHV (180 aa)). Cys-320 is a binding site for phytochromobilin. A PAS domain is found at 609–680 (LANEMSRVLE…RLLSLALQGE (72 aa)). The PAC domain occupies 683–739 (QNVEIKLKTFGTQTTERAVILIVNACCSRDASDFVVGVFFVGQDVTEQRMFMDRFTR). The hinge stretch occupies residues 779–1003 (DHATGSVERL…WSFSEKFFQW (225 aa)). The region spanning 1004–1307 (IQITGSLGSG…DSYPSTEEPS (304 aa)) is the Protein kinase domain. Residues 1010–1018 (LGSGSSATV) and Lys-1031 contribute to the ATP site. Residue Asp-1127 is part of the active site.

In the N-terminal section; belongs to the phytochrome family. It in the C-terminal section; belongs to the protein kinase superfamily. Ser/Thr protein kinase family. In terms of assembly, homodimer. In terms of processing, contains one covalently linked phytochromobilin chromophore.

It localises to the cell membrane. The enzyme catalyses L-seryl-[protein] + ATP = O-phospho-L-seryl-[protein] + ADP + H(+). It catalyses the reaction L-threonyl-[protein] + ATP = O-phospho-L-threonyl-[protein] + ADP + H(+). Its function is as follows. Regulatory photoreceptor which exists in two forms that are reversibly interconvertible by light: the Pr form that absorbs maximally in the red region of the spectrum and the Pfr form that absorbs maximally in the far-red region. Photoconversion of Pr to Pfr induces an array of morphogenic responses, whereas reconversion of Pfr to Pr cancels the induction of those responses. Pfr controls the expression of a number of nuclear genes including those encoding the small subunit of ribulose-bisphosphate carboxylase, chlorophyll A/B binding protein, protochlorophyllide reductase, rRNA, etc. It also controls the expression of its own gene(s) in a negative feedback fashion. The chain is Light-sensor Protein kinase (PHY1) from Ceratodon purpureus (Fire moss).